The sequence spans 502 residues: 2,3-bisphosphoglycerate-independent phosphoglycerate mutase (502 aa).

Mn(2+) is bound by residues Asp13 and Ser63. Ser63 (phosphoserine intermediate) is an active-site residue. Substrate contacts are provided by residues His117, 146–147 (RD), Arg177, Arg183, 251–254 (RSDR), and Lys324. Positions 389, 393, 430, 431, and 448 each coordinate Mn(2+).

The protein belongs to the BPG-independent phosphoglycerate mutase family. As to quaternary structure, monomer. The cofactor is Mn(2+).

It carries out the reaction (2R)-2-phosphoglycerate = (2R)-3-phosphoglycerate. The protein operates within carbohydrate degradation; glycolysis; pyruvate from D-glyceraldehyde 3-phosphate: step 3/5. Functionally, catalyzes the interconversion of 2-phosphoglycerate and 3-phosphoglycerate. The protein is 2,3-bisphosphoglycerate-independent phosphoglycerate mutase of Ureaplasma urealyticum serovar 10 (strain ATCC 33699 / Western).